The primary structure comprises 126 residues: SH2 domain-containing protein 1A (126 aa).

The 99-residue stretch at 6–104 (VYHGKISRET…VTPLQYPVEK (99 aa)) folds into the SH2 domain. Residues 67–92 (ETAPGVHKRFFRKVKNLISAFQKPDQ) are interaction with FYN SH3 domain. K89 bears the N6-acetyllysine mark. Positions 100-126 (YPVEKSSGRGPQAPTGRRDSDICLNAP) are disordered.

In terms of assembly, interacts with CD84, CD244, LY9, SLAMF1 and FYN. Interacts with NTRK1, NTRK2 and NTRK3. T-cells.

It localises to the cytoplasm. Cytoplasmic adapter regulating receptors of the signaling lymphocytic activation molecule (SLAM) family such as SLAMF1, CD244, LY9, CD84, SLAMF6 and SLAMF7. In SLAM signaling seems to cooperate with SH2D1B/EAT-2. Initially it has been proposed that association with SLAMF1 prevents SLAMF1 binding to inhibitory effectors including INPP5D/SHIP1 and PTPN11/SHP-2. However, by simultaneous interactions, recruits FYN which subsequently phosphorylates and activates SLAMF1. Positively regulates CD244/2B4- and CD84-mediated natural killer (NK) cell functions. Can also promote CD48-, SLAMF6 -, LY9-, and SLAMF7-mediated NK cell activation. In the context of NK cell-mediated cytotoxicity enhances conjugate formation with target cells. May also regulate the activity of the neurotrophin receptors NTRK1, NTRK2 and NTRK3. This is SH2 domain-containing protein 1A (Sh2d1a) from Mus musculus (Mouse).